Here is a 591-residue protein sequence, read N- to C-terminus: Calnexin (591 aa).

The signal sequence occupies residues 1-20; it reads MEGKWLLCLLLVLGTAAIQA. The Lumenal portion of the chain corresponds to 21–482; sequence HDGHDDDMID…QMLEAAEERP (462 aa). Ser75 and Asp118 together coordinate Ca(2+). Lys138 bears the N6-acetyllysine mark. Cysteines 161 and 195 form a disulfide. Residues Tyr165, Lys167, Tyr186, and Asp193 each coordinate an alpha-D-glucoside. Residues 261-347 form a disordered region; that stretch reads GNLLNDMTPP…EKPEDWDEDM (87 aa). The segment covering 275–320 has biased composition (basic and acidic residues); the sequence is REIEDPEDRKPEDWDERPKIADPDAVKPDDWDEDAPSKIPDEEATK. Residues 277–410 are p domain (Extended arm); the sequence is IEDPEDRKPE…RKIPNPDFFE (134 aa). A run of 5 repeats spans residues 279–291, 296–308, 315–327, 334–346, and 349–359. 4 X approximate repeats stretches follow at residues 279–346 and 349–406; these read DPED…WDED and GEWE…IPNP. Positions 324–347 are enriched in acidic residues; sequence WLDDEPEYIPDPDAEKPEDWDEDM. The segment at 327-360 is interaction with PPIB; it reads DEPEYIPDPDAEKPEDWDEDMDGEWEAPQIANPK. The cysteines at positions 361 and 367 are disulfide-linked. 3 tandem repeats follow at residues 368-378, 382-392, and 396-406. Glu426 is an an alpha-D-glucoside binding site. A Ca(2+)-binding site is contributed by Asp437. Residues 483 to 503 form a helical membrane-spanning segment; that stretch reads WLWVVYILTVALPVFLVILFC. Residues Cys503 and Cys504 are each lipidated (S-palmitoyl cysteine). The Cytoplasmic segment spans residues 504–591; the sequence is CSGKKQSNAM…SPRNRKPRRE (88 aa). The tract at residues 504–591 is sufficient to mediate interaction with SGIP1; the sequence is CSGKKQSNAM…SPRNRKPRRE (88 aa). Positions 514 to 538 are enriched in basic and acidic residues; the sequence is EYKKTDAPQPDVKDEEGKEEEKNKG. The segment at 514–591 is disordered; sequence EYKKTDAPQP…SPRNRKPRRE (78 aa). Ser553 bears the Phosphoserine mark. The segment covering 555–568 has biased composition (acidic residues); that stretch reads AEEDGGTGSQDEED. Thr561 is modified (phosphothreonine). The residue at position 563 (Ser563) is a Phosphoserine; by MAPK3. Position 582 is a phosphoserine (Ser582).

This sequence belongs to the calreticulin family. As to quaternary structure, interacts with MAPK3/ERK1. Interacts with KCNH2. Associates with ribosomes. Interacts with SGIP1; involved in negative regulation of endocytosis. The palmitoylated form interacts with the ribosome-translocon complex component SSR1, promoting efficient folding of glycoproteins. Interacts with SERPINA2P/SERPINA2 and with the S and Z variants of SERPINA1. Interacts with PPIB. Interacts with ZNRF4. Interacts with SMIM22. Interacts with TMX2. Interacts with TMEM35A/NACHO and CHRNA7. Interacts with reticulophagy regulators RETREG2 and RETREG3. Interacts with DNM1L; may form part of a larger protein complex at the ER-mitochondrial interface during mitochondrial fission. Interacts with ADAM7. Phosphorylated at Ser-563 by MAPK3/ERK1. Phosphorylation by MAPK3/ERK1 increases its association with ribosomes. In terms of processing, palmitoylation by DHHC6 leads to the preferential localization to the perinuclear rough ER. It mediates the association of calnexin with the ribosome-translocon complex (RTC) which is required for efficient folding of glycosylated proteins. Post-translationally, ubiquitinated, leading to proteasomal degradation. Probably ubiquitinated by ZNRF4.

It localises to the endoplasmic reticulum membrane. The protein localises to the mitochondrion membrane. The protein resides in the melanosome membrane. In terms of biological role, calcium-binding protein that interacts with newly synthesized monoglucosylated glycoproteins in the endoplasmic reticulum. It may act in assisting protein assembly and/or in the retention within the ER of unassembled protein subunits. It seems to play a major role in the quality control apparatus of the ER by the retention of incorrectly folded proteins. Associated with partial T-cell antigen receptor complexes that escape the ER of immature thymocytes, it may function as a signaling complex regulating thymocyte maturation. Additionally it may play a role in receptor-mediated endocytosis at the synapse. The sequence is that of Calnexin (Canx) from Rattus norvegicus (Rat).